Here is a 207-residue protein sequence, read N- to C-terminus: Protein lin-7 homolog B (207 aa).

Residues 1 to 13 (MAALVEPLGLERD) carry the Kinase interacting site motif. In terms of domain architecture, L27 spans 10–65 (LERDVSRAVELLERLQRSGELPPQKLQALQRVLQSRFCSAIREVYEQLYDTLDITG). The PDZ domain maps to 93–175 (VVELPKTDEG…SVKLVVRYTP (83 aa)). The interval 187-207 (KMRSARRRQQHHSYTSLESRG) is disordered. A compositionally biased stretch (polar residues) spans 198-207 (HSYTSLESRG).

It belongs to the lin-7 family. Forms a complex with CASK and CASKIN1. Component of the brain-specific heterotrimeric complex (LIN-10-LIN-2-LIN-7 complex) composed of at least APBA1, CASK, and LIN7, which associates with the motor protein KIF17 to transport vesicles along microtubules. Forms a heterotrimeric complex composed of MMP5, LIN7B and PATJ; the N-terminal L27 domain of PALS1 interacts with the L27 domain of PATJ and the C-terminal L27 domain of PALS1 interacts with the L27 domain of LIN7B. Forms a heterotrimeric complex with DLG1 and CASK via their L27 domains. Interacts with DLG4 and GRIN2B as well as CDH1 and CTNNB1, the channels KCNJ12/Kir2.2, KCNJ4/Kir2.3 and probably KCNJ2/Kir2.1 and SLC6A12/BGT-1 via its PDZ domain. The association of LIN7A with cadherin and beta-catenin is calcium-dependent, occurs at synaptic junctions and requires the actin cytoskeleton. Interacts with EGFR, ERBB2, ERBB3 and ERBB4 with both PDZ and KID domains. Associates with KIF17 via APBA1. Interacts with ASIC3. Interacts with TOPK. Interacts with RTKN. Interacts with APBA1. Interacts with MPP7. Interacts with DLG2. Interacts with DLG3. In terms of tissue distribution, expressed in the kidney; predominantly in the vasa recta.

The protein localises to the cell membrane. Its subcellular location is the basolateral cell membrane. It is found in the cell junction. It localises to the postsynaptic density membrane. The protein resides in the tight junction. Functionally, plays a role in establishing and maintaining the asymmetric distribution of channels and receptors at the plasma membrane of polarized cells. Forms membrane-associated multiprotein complexes that may regulate delivery and recycling of proteins to the correct membrane domains. The tripartite complex composed of LIN7 (LIN7A, LIN7B or LIN7C), CASK and APBA1 associates with the motor protein KIF17 to transport vesicles containing N-methyl-D-aspartate (NMDA) receptor subunit NR2B along microtubules. This complex may have the potential to couple synaptic vesicle exocytosis to cell adhesion in brain. Ensures the proper localization of GRIN2B (subunit 2B of the NMDA receptor) to neuronal postsynaptic density and may function in localizing synaptic vesicles at synapses where it is recruited by beta-catenin and cadherin. Required to localize Kir2 channels, GABA transporter (SLC6A12) and EGFR/ERBB1, ERBB2, ERBB3 and ERBB4 to the basolateral membrane of epithelial cells. May increase the amplitude of ASIC3 acid-evoked currents by stabilizing the channel at the cell surface. In Mus musculus (Mouse), this protein is Protein lin-7 homolog B (Lin7b).